The primary structure comprises 565 residues: Adenine deaminase (565 aa).

It belongs to the metallo-dependent hydrolases superfamily. Adenine deaminase family. Mn(2+) is required as a cofactor.

It carries out the reaction adenine + H2O + H(+) = hypoxanthine + NH4(+). This is Adenine deaminase from Sinorhizobium fredii (strain NBRC 101917 / NGR234).